The primary structure comprises 164 residues: Mineralocorticoid receptor (164 aa).

Residues 1-162 (QYSWMCLSSF…EFPRCWWRSS (162 aa)) enclose the NR LBD domain. Residues Arg-15 and Thr-143 each contribute to the 21-hydroxyprogesterone site. Residues Arg-15 and Thr-143 each contribute to the aldosterone site. Arg-15 and Thr-143 together coordinate progesterone.

This sequence belongs to the nuclear hormone receptor family. NR3 subfamily. In terms of assembly, heteromultimeric cytoplasmic complex with HSP90, HSP70, and FKBP4, in the absence of ligand. After ligand binding, it translocates to the nucleus and binds to DNA as a homodimer and as a heterodimer with NR3C1. Binds the coactivator NCOA2. May interact with HSD11B2 in the absence of ligand. Binds the coactivators NCOA1, TIF1 and NRIP1. In terms of processing, phosphorylated.

Its subcellular location is the cytoplasm. It localises to the nucleus. The protein resides in the endoplasmic reticulum membrane. Functionally, receptor for both mineralocorticoids (MC) such as aldosterone and glucocorticoids (GC) such as corticosterone or cortisol. Binds to mineralocorticoid response elements (MRE) and transactivates target genes. The effect of MC is to increase ion and water transport and thus raise extracellular fluid volume and blood pressure and lower potassium levels. In Sus scrofa (Pig), this protein is Mineralocorticoid receptor (NR3C2).